The sequence spans 224 residues: uncharacterized protein (224 aa).

The HTH gntR-type domain maps to 10–77 (TPYYLQFYNQ…DRNGFSITSL (68 aa)). A DNA-binding region (H-T-H motif) is located at residues 37-56 (ETQLAKSFGVSRSPIREAMR).

This is an uncharacterized protein from Bacillus subtilis (strain 168).